We begin with the raw amino-acid sequence, 220 residues long: UPF0319 protein YccT (220 aa).

The N-terminal stretch at 1-20 (MKTGALATFLALCLPVTVFA) is a signal peptide.

The protein belongs to the UPF0319 family.

The polypeptide is UPF0319 protein YccT (Salmonella enteritidis PT4 (strain P125109)).